The sequence spans 1166 residues: UDP-N-acetylglucosamine transferase subunit ALG13 (1166 aa).

The segment at Met-1–Cys-125 is glycosyltransferase activity. Positions Thr-126–Leu-394 are deubiquitinase activity. Residues Leu-225–Lys-346 enclose the OTU domain. The For deubiquitinase activity role is filled by Asp-233. The Nucleophile; for deubiquitinase activity role is filled by Cys-236. His-339 serves as the catalytic For deubiquitinase activity. Residues Ala-393–Pro-438 are disordered. The Tudor domain maps to Tyr-486 to Pro-546. Pro residues-rich tracts occupy residues Pro-921–Ala-930, Pro-941–Ser-957, and Gln-1004–Gln-1034. 2 disordered regions span residues Pro-921–Pro-966 and Gln-998–Leu-1056.

It belongs to the glycosyltransferase 28 family. Forms with ALG14 the active heterodimeric UDP-N-acetylglucosamine transferase complex. As to quaternary structure, not able to interact with ALG14 to form an active UDP-N-acetylglucosamine transferase complex.

It localises to the endoplasmic reticulum membrane. The enzyme catalyses an N-acetyl-alpha-D-glucosaminyl-diphospho-di-trans,poly-cis-dolichol + UDP-N-acetyl-alpha-D-glucosamine = an N,N'-diacetylchitobiosyl-diphospho-di-trans,poly-cis-dolichol + UDP + H(+). The protein operates within protein modification; protein glycosylation. Its function is as follows. Catalytic subunit of the UDP-N-acetylglucosamine transferase complex that operates in the biosynthetic pathway of dolichol-linked oligosaccharides, the glycan precursors employed in protein asparagine (N)-glycosylation. The assembly of dolichol-linked oligosaccharides begins on the cytosolic side of the endoplasmic reticulum membrane and finishes in its lumen. The sequential addition of sugars to dolichol pyrophosphate produces dolichol-linked oligosaccharides containing fourteen sugars, including two GlcNAcs, nine mannoses and three glucoses. Once assembled, the oligosaccharide is transferred from the lipid to nascent proteins by oligosaccharyltransferases. On the cytoplasmic face of the endoplasmic reticulum, the dimeric ALG13/ALG14 complex catalyzes the second step of dolichol pyrophosphate biosynthesis, transferring a beta1,4-linked N-acetylglucosamine (GlcNAc) from UDP-GlcNAc to GlcNAc-pyrophosphatedolichol (Gn-PDol) to produce N,N'-diacetylchitobiosyl diphosphodolichol. N,N'-diacetylchitobiosyl diphosphodolichol is a substrate for ALG1, the following enzyme in the biosynthetic pathway. Functionally, no glycosyltransferase or deubiquitinase activity is detected for this potential multifunctional enzyme. This is UDP-N-acetylglucosamine transferase subunit ALG13 from Mus musculus (Mouse).